Reading from the N-terminus, the 202-residue chain is Tetratricopeptide repeat protein 36 (202 aa).

TPR repeat units follow at residues 49-82, 83-116, and 121-154; these read AQDL…LPER, ASAY…SGIA, and RQAL…GSDF.

The protein belongs to the TTC36 family.

This Xenopus tropicalis (Western clawed frog) protein is Tetratricopeptide repeat protein 36 (ttc36).